Consider the following 899-residue polypeptide: Suppressor of glycerol defect protein 1 (899 aa).

A compositionally biased stretch (basic and acidic residues) spans 24-33 (QDERFSISEG). Disordered stretches follow at residues 24–181 (QDER…VSYP) and 248–326 (ETNS…DDSE). Basic residues predominate over residues 34-49 (KKRRRGNGKHLSRKEK). The span at 65-77 (REINSSRLKSAPT) shows a compositional bias: polar residues. A compositionally biased stretch (acidic residues) spans 103 to 126 (DESESNENWDSDEVLTDEVAEESG). Basic and acidic residues-rich tracts occupy residues 134 to 143 (ETMKKLESLK), 162 to 174 (SYEK…RDTN), and 251 to 264 (SMRK…KAFS). Residues 265-292 (SDDDLSASDFEDSDGLSESDNDSVADSD) show a composition bias toward acidic residues. In terms of domain architecture, MIF4G spans 335–540 (SKKVNSSLNK…DTMSDLKNNR (206 aa)). The MI domain maps to 644-781 (DIRRAIFISI…KLDVFKHVPF (138 aa)). The residue at position 736 (Ser-736) is a Phosphoserine.

The protein belongs to the CWC22 family. Interacts with PLC1.

It is found in the nucleus. It localises to the nucleolus. Functionally, involved in osmoregulatory glycerol response, probably through its interaction with PLC1 which regulates the expression of GDP1. This is Suppressor of glycerol defect protein 1 (SGD1) from Saccharomyces cerevisiae (strain ATCC 204508 / S288c) (Baker's yeast).